The primary structure comprises 366 residues: DNA polymerase IV (366 aa).

Residues 6-197 enclose the UmuC domain; it reads IIHVDMDYFY…LKVSKLWGIG (192 aa). Positions 10 and 114 each coordinate Mg(2+). E115 is an active-site residue.

This sequence belongs to the DNA polymerase type-Y family. As to quaternary structure, monomer. The cofactor is Mg(2+).

The protein localises to the cytoplasm. The enzyme catalyses DNA(n) + a 2'-deoxyribonucleoside 5'-triphosphate = DNA(n+1) + diphosphate. Poorly processive, error-prone DNA polymerase involved in untargeted mutagenesis. Copies undamaged DNA at stalled replication forks, which arise in vivo from mismatched or misaligned primer ends. These misaligned primers can be extended by PolIV. Exhibits no 3'-5' exonuclease (proofreading) activity. May be involved in translesional synthesis. This is DNA polymerase IV from Methanosarcina acetivorans (strain ATCC 35395 / DSM 2834 / JCM 12185 / C2A).